The primary structure comprises 179 residues: Large ribosomal subunit protein uL5 (179 aa).

This sequence belongs to the universal ribosomal protein uL5 family. Part of the 50S ribosomal subunit; part of the 5S rRNA/L5/L18/L25 subcomplex. Contacts the 5S rRNA and the P site tRNA. Forms a bridge to the 30S subunit in the 70S ribosome.

Functionally, this is one of the proteins that bind and probably mediate the attachment of the 5S RNA into the large ribosomal subunit, where it forms part of the central protuberance. In the 70S ribosome it contacts protein S13 of the 30S subunit (bridge B1b), connecting the 2 subunits; this bridge is implicated in subunit movement. Contacts the P site tRNA; the 5S rRNA and some of its associated proteins might help stabilize positioning of ribosome-bound tRNAs. The protein is Large ribosomal subunit protein uL5 of Shewanella pealeana (strain ATCC 700345 / ANG-SQ1).